We begin with the raw amino-acid sequence, 435 residues long: Eukaryotic translation initiation factor 3 subunit E (435 aa).

The region spanning 241–409 (TDMFFSPSYI…GTVIMNHPPQ (169 aa)) is the PCI domain.

Belongs to the eIF-3 subunit E family. Component of the eukaryotic translation initiation factor 3 (eIF-3) complex.

The protein resides in the cytoplasm. Its function is as follows. Component of the eukaryotic translation initiation factor 3 (eIF-3) complex, which is involved in protein synthesis of a specialized repertoire of mRNAs and, together with other initiation factors, stimulates binding of mRNA and methionyl-tRNAi to the 40S ribosome. The eIF-3 complex specifically targets and initiates translation of a subset of mRNAs involved in cell proliferation. The protein is Eukaryotic translation initiation factor 3 subunit E of Phaeosphaeria nodorum (strain SN15 / ATCC MYA-4574 / FGSC 10173) (Glume blotch fungus).